The sequence spans 364 residues: tRNA-specific 2-thiouridylase MnmA (364 aa).

ATP contacts are provided by residues 6-13 (AMSGGVDS) and Leu-32. The Nucleophile role is filled by Cys-101. Cysteines 101 and 193 form a disulfide. Gly-125 contacts ATP. The segment at 143–145 (KDQ) is interaction with tRNA. Cys-193 functions as the Cysteine persulfide intermediate in the catalytic mechanism.

This sequence belongs to the MnmA/TRMU family.

It is found in the cytoplasm. It carries out the reaction S-sulfanyl-L-cysteinyl-[protein] + uridine(34) in tRNA + AH2 + ATP = 2-thiouridine(34) in tRNA + L-cysteinyl-[protein] + A + AMP + diphosphate + H(+). Catalyzes the 2-thiolation of uridine at the wobble position (U34) of tRNA, leading to the formation of s(2)U34. The polypeptide is tRNA-specific 2-thiouridylase MnmA (Rhodococcus opacus (strain B4)).